Here is a 180-residue protein sequence, read N- to C-terminus: Bifunctional protein PyrR (180 aa).

The PRPP-binding signature appears at 101 to 113 (VVLVDDVIFKGRT).

Belongs to the purine/pyrimidine phosphoribosyltransferase family. PyrR subfamily.

It catalyses the reaction UMP + diphosphate = 5-phospho-alpha-D-ribose 1-diphosphate + uracil. In terms of biological role, regulates the transcription of the pyrimidine nucleotide (pyr) operon in response to exogenous pyrimidines. Its function is as follows. Also displays a weak uracil phosphoribosyltransferase activity which is not physiologically significant. The polypeptide is Bifunctional protein PyrR (Trichormus variabilis (strain ATCC 29413 / PCC 7937) (Anabaena variabilis)).